A 173-amino-acid polypeptide reads, in one-letter code: Disulfide bond formation protein B (173 aa).

The Cytoplasmic segment spans residues 1–16 (MRILSSLKTFSQSRLS). The chain crosses the membrane as a helical span at residues 17 to 33 (WLLLLAFVVFFTLCAMY). The Periplasmic segment spans residues 34 to 51 (FQHVMLLAPCVMCIYERI). A disulfide bridge links Cys-43 with Cys-46. Residues 52–67 (AMLGIGVAALIGAIAP) traverse the membrane as a helical segment. The Cytoplasmic segment spans residues 68–74 (QNPVVRW). The chain crosses the membrane as a helical span at residues 75–92 (LGFAAWGASSYKGLMLAI). Over 93–147 (EHVNYQFNPSPFATCDLFVTFPAWAPLNQWAPNLFEAYGDCSKVVWQFLTLSMPQ) the chain is Periplasmic. Residues Cys-107 and Cys-133 are joined by a disulfide bond. Residues 148–166 (WLVVIFAANLLALAIFVVA) form a helical membrane-spanning segment. Residues 167-173 (QLAKTSR) lie on the Cytoplasmic side of the membrane.

This sequence belongs to the DsbB family.

It is found in the cell inner membrane. Functionally, required for disulfide bond formation in some periplasmic proteins. Acts by oxidizing the DsbA protein. This is Disulfide bond formation protein B from Vibrio cholerae serotype O1 (strain ATCC 39315 / El Tor Inaba N16961).